We begin with the raw amino-acid sequence, 377 residues long: Sterol 24-C-methyltransferase erg6 (377 aa).

It belongs to the class I-like SAM-binding methyltransferase superfamily. Erg6/SMT family.

It is found in the microsome. The protein resides in the mitochondrion. It carries out the reaction lanosterol + S-adenosyl-L-methionine = eburicol + S-adenosyl-L-homocysteine + H(+). The protein operates within steroid metabolism; ergosterol biosynthesis. With respect to regulation, specific and total activity is decreased in presence of alpha-bisabolol. In terms of biological role, sterol 24-C-methyltransferase; part of the third module of ergosterol biosynthesis pathway that includes the late steps of the pathway. Methylates lanosterol at C-24 to produce eburicol. The third module or late pathway involves the ergosterol synthesis itself through consecutive reactions that mainly occur in the endoplasmic reticulum (ER) membrane. Firstly, the squalene synthase erg9 catalyzes the condensation of 2 farnesyl pyrophosphate moieties to form squalene, which is the precursor of all steroids. Squalene synthase is crucial for balancing the incorporation of farnesyl diphosphate (FPP) into sterol and nonsterol isoprene synthesis. Secondly, squalene is converted into lanosterol by the consecutive action of the squalene epoxidase erg1 and the lanosterol synthase erg7. Then, the delta(24)-sterol C-methyltransferase erg6 methylates lanosterol at C-24 to produce eburicol. Eburicol is the substrate of the sterol 14-alpha demethylase encoded by cyp51A and cyp51B, to yield 4,4,24-trimethyl ergosta-8,14,24(28)-trienol. The C-14 reductase erg24 then reduces the C14=C15 double bond which leads to 4,4-dimethylfecosterol. A sequence of further demethylations at C-4, involving the C-4 demethylation complex containing the C-4 methylsterol oxidases erg25A or erg25B, the sterol-4-alpha-carboxylate 3-dehydrogenase erg26 and the 3-keto-steroid reductase erg27, leads to the production of fecosterol via 4-methylfecosterol. The C-8 sterol isomerase erg2 then catalyzes the reaction which results in unsaturation at C-7 in the B ring of sterols and thus converts fecosterol to episterol. The sterol-C5-desaturase erg3B then catalyzes the introduction of a C-5 double bond in the B ring to produce 5-dehydroepisterol. The 2 other sterol-C5-desaturases, erg3A and erg3C, seem to be less important in ergosterol biosynthesis. The C-22 sterol desaturase erg5 further converts 5-dehydroepisterol into ergosta-5,7,22,24(28)-tetraen-3beta-ol by forming the C-22(23) double bond in the sterol side chain. Finally, ergosta-5,7,22,24(28)-tetraen-3beta-ol is substrate of the C-24(28) sterol reductases erg4A and erg4B to produce ergosterol. Possible alternative sterol biosynthetic pathways might exist from fecosterol to ergosterol, depending on the activities of the erg3 isoforms. This Aspergillus fumigatus (strain ATCC MYA-4609 / CBS 101355 / FGSC A1100 / Af293) (Neosartorya fumigata) protein is Sterol 24-C-methyltransferase erg6.